A 164-amino-acid polypeptide reads, in one-letter code: Large ribosomal subunit protein uL10 (164 aa).

The protein belongs to the universal ribosomal protein uL10 family. As to quaternary structure, part of the ribosomal stalk of the 50S ribosomal subunit. The N-terminus interacts with L11 and the large rRNA to form the base of the stalk. The C-terminus forms an elongated spine to which L12 dimers bind in a sequential fashion forming a multimeric L10(L12)X complex.

Its function is as follows. Forms part of the ribosomal stalk, playing a central role in the interaction of the ribosome with GTP-bound translation factors. The protein is Large ribosomal subunit protein uL10 of Helicobacter pylori (strain G27).